The sequence spans 244 residues: Mediator of RNA polymerase II transcription subunit 9 (244 aa).

Over residues M1–N10 the composition is skewed to gly residues. Disordered stretches follow at residues M1–N28 and Q96–Q131. The segment covering M13–N28 has biased composition (polar residues). Composition is skewed to low complexity over residues Q96–Q111 and T122–Q131. A coiled-coil region spans residues K212–I239.

Belongs to the plant Mediator complex subunit 9 family. In terms of assembly, component of the Mediator complex. Interacts with MEE14/CBP1.

Its subcellular location is the nucleus. Its function is as follows. Component of the Mediator complex, a coactivator involved in the regulated transcription of nearly all RNA polymerase II-dependent genes. Mediator functions as a bridge to convey information from gene-specific regulatory proteins to the basal RNA polymerase II transcription machinery. The Mediator complex, having a compact conformation in its free form, is recruited to promoters by direct interactions with regulatory proteins and serves for the assembly of a functional pre-initiation complex with RNA polymerase II and the general transcription factors. This chain is Mediator of RNA polymerase II transcription subunit 9 (MED9), found in Arabidopsis thaliana (Mouse-ear cress).